Reading from the N-terminus, the 371-residue chain is Chaperone protein DnaJ (371 aa).

Residues 4–68 (DYYQILGVSK…QKRAAYDRFG (65 aa)) form the J domain. The CR-type zinc-finger motif lies at 134-212 (GIEKNISFSS…CHGMGRYHKQ (79 aa)). Zn(2+) is bound by residues Cys147, Cys150, Cys164, Cys167, Cys186, Cys189, Cys200, and Cys203. CXXCXGXG motif repeat units follow at residues 147 to 154 (CDTCHGTG), 164 to 171 (CDACGGVG), 186 to 193 (CHKCQGNG), and 200 to 207 (CKKCHGMG).

It belongs to the DnaJ family. In terms of assembly, homodimer. Zn(2+) serves as cofactor.

Its subcellular location is the cytoplasm. Its function is as follows. Participates actively in the response to hyperosmotic and heat shock by preventing the aggregation of stress-denatured proteins and by disaggregating proteins, also in an autonomous, DnaK-independent fashion. Unfolded proteins bind initially to DnaJ; upon interaction with the DnaJ-bound protein, DnaK hydrolyzes its bound ATP, resulting in the formation of a stable complex. GrpE releases ADP from DnaK; ATP binding to DnaK triggers the release of the substrate protein, thus completing the reaction cycle. Several rounds of ATP-dependent interactions between DnaJ, DnaK and GrpE are required for fully efficient folding. Also involved, together with DnaK and GrpE, in the DNA replication of plasmids through activation of initiation proteins. The polypeptide is Chaperone protein DnaJ (Rickettsia felis (strain ATCC VR-1525 / URRWXCal2) (Rickettsia azadi)).